Consider the following 369-residue polypeptide: Putative protein FAM10A5 (369 aa).

Residues 38–98 (MGGKVPPATQ…IEPDTDAPQE (61 aa)) are disordered. Residues 49–73 (AKSEENTKEEKPDSKKVEEDLKADE) are compositionally biased toward basic and acidic residues. Residues 89-98 (IEPDTDAPQE) are compositionally biased toward acidic residues. 3 TPR repeats span residues 114-147 (ANDKKVAAIEVLNDGELQKAIDLFTDAIKLNPRL), 149-181 (ILYAKRASVFVKLQKPNAAIQDCDRAIEINPDS), and 183-215 (QPYKWRGKAHRLLGHWEEAAHDLAFACKLDYDE). Basic and acidic residues predominate over residues 256 to 272 (KAQEEQERAQREEEARR). The disordered stretch occupies residues 256–300 (KAQEEQERAQREEEARRQSGAHYGPFPGGFPGGMPGNFPGGMPGM). Gly residues predominate over residues 281–300 (FPGGFPGGMPGNFPGGMPGM). One can recognise an STI1 domain in the interval 319 to 358 (DPEALAAMQDPEVMVAFQDVAQNPANMSKYQSNPKVMNLI). Phosphoserine is present on serine 346. N6-acetyllysine is present on residues lysine 353 and lysine 360.

The protein belongs to the FAM10 family.

The protein localises to the cytoplasm. The protein is Putative protein FAM10A5 (ST13P5) of Homo sapiens (Human).